Here is a 325-residue protein sequence, read N- to C-terminus: tRNA(Ile)-lysidine synthase (325 aa).

34–39 (SGGADS) provides a ligand contact to ATP.

Belongs to the tRNA(Ile)-lysidine synthase family.

It is found in the cytoplasm. It catalyses the reaction cytidine(34) in tRNA(Ile2) + L-lysine + ATP = lysidine(34) in tRNA(Ile2) + AMP + diphosphate + H(+). Ligates lysine onto the cytidine present at position 34 of the AUA codon-specific tRNA(Ile) that contains the anticodon CAU, in an ATP-dependent manner. Cytidine is converted to lysidine, thus changing the amino acid specificity of the tRNA from methionine to isoleucine. The protein is tRNA(Ile)-lysidine synthase of Rhodococcus erythropolis (strain PR4 / NBRC 100887).